A 456-amino-acid chain; its full sequence is 26S proteasome non-ATPase regulatory subunit 12 (456 aa).

Position 2 is an N-acetylalanine (Ala-2). A Glycyl lysine isopeptide (Lys-Gly) (interchain with G-Cter in SUMO1); alternate cross-link involves residue Lys-92. Residue Lys-92 forms a Glycyl lysine isopeptide (Lys-Gly) (interchain with G-Cter in SUMO2); alternate linkage. 2 positions are modified to N6-acetyllysine: Lys-221 and Lys-368. The 179-residue stretch at 242–420 (SICKHYRAIY…GIINFQRPKD (179 aa)) folds into the PCI domain.

It belongs to the proteasome subunit p55 family. In terms of assembly, component of the 19S proteasome regulatory particle complex. The 26S proteasome consists of a 20S core particle (CP) and two 19S regulatory subunits (RP). The regulatory particle is made of a lid composed of 9 subunits including PSMD12, a base containing 6 ATPases and few additional components. Interacts with ERCC6.

In terms of biological role, component of the 26S proteasome, a multiprotein complex involved in the ATP-dependent degradation of ubiquitinated proteins. This complex plays a key role in the maintenance of protein homeostasis by removing misfolded or damaged proteins, which could impair cellular functions, and by removing proteins whose functions are no longer required. Therefore, the proteasome participates in numerous cellular processes, including cell cycle progression, apoptosis, or DNA damage repair. In Bos taurus (Bovine), this protein is 26S proteasome non-ATPase regulatory subunit 12 (PSMD12).